The primary structure comprises 492 residues: Aspartyl/glutamyl-tRNA(Asn/Gln) amidotransferase subunit B (492 aa).

The protein belongs to the GatB/GatE family. GatB subfamily. Heterotrimer of A, B and C subunits.

The catalysed reaction is L-glutamyl-tRNA(Gln) + L-glutamine + ATP + H2O = L-glutaminyl-tRNA(Gln) + L-glutamate + ADP + phosphate + H(+). It carries out the reaction L-aspartyl-tRNA(Asn) + L-glutamine + ATP + H2O = L-asparaginyl-tRNA(Asn) + L-glutamate + ADP + phosphate + 2 H(+). Functionally, allows the formation of correctly charged Asn-tRNA(Asn) or Gln-tRNA(Gln) through the transamidation of misacylated Asp-tRNA(Asn) or Glu-tRNA(Gln) in organisms which lack either or both of asparaginyl-tRNA or glutaminyl-tRNA synthetases. The reaction takes place in the presence of glutamine and ATP through an activated phospho-Asp-tRNA(Asn) or phospho-Glu-tRNA(Gln). The chain is Aspartyl/glutamyl-tRNA(Asn/Gln) amidotransferase subunit B from Prochlorococcus marinus (strain SARG / CCMP1375 / SS120).